Reading from the N-terminus, the 614-residue chain is Zinc finger protein 276 (614 aa).

Residues 1–50 form a disordered region; that stretch reads MKRDRLGRFLSPGSSRQCGASDGGGGVSRTRGRPSLSGGPRVDGATARRA. The ZAD domain occupies 77–163; that stretch reads GHCRLCHGKF…LQRVNASPAG (87 aa). Positions 79, 82, 136, and 139 each coordinate Zn(2+). The segment at 268–420 is disordered; it reads APRLPQHRGW…KKPGPKPGWK (153 aa). A compositionally biased stretch (acidic residues) spans 357 to 369; it reads SDLSEGDVLSEDE. Residues 386–408 are compositionally biased toward basic and acidic residues; sequence YPERKVSGKKSESKEAKKSEEPR. The span at 409–420 shows a compositional bias: basic residues; the sequence is IRKKPGPKPGWK. C2H2-type zinc fingers lie at residues 434–458, 465–490, 496–518, 524–546, and 554–577; these read YKCPYQGCTAVYRGADGMKKHIKEH, RPCPHPGCNKVFMIDRYLQRHVKLIH, YICDECGQTFKQRKHLLVHQMRH, LQCEVCGFQCRQRASLKYHMTKH, and FACDQCGRRFEKAHNLNVHMSMVH. A disordered region spans residues 583–614; the sequence is QDKALPLEAEPPPGPPSPSVTTEGQAVKPEPT. Residues 591–600 show a composition bias toward pro residues; sequence AEPPPGPPSP.

The protein localises to the nucleus. It localises to the chromosome. The protein resides in the centromere. Its subcellular location is the kinetochore. Functionally, may be involved in transcriptional regulation. The chain is Zinc finger protein 276 (ZNF276) from Homo sapiens (Human).